We begin with the raw amino-acid sequence, 837 residues long: MASKRKSTTPCMVRTSQVVEQDVPEEVDRAKEKGIGTPQPDVAKDSWAAELENSSKENEVIEVKSMGESQSKKLQGGYECKYCPYSTQNLNEFTEHVDMQHPNVILNPLYVCAECNFTTKKYDSLSDHNSKFHPGEANFKLKLIKRNNQTVLEQSIETTNHVVSITTSGPGTGDSDSGISVSKTPIMKPGKPKADAKKVPKKPEEITPENHVEGTARLVTDTAEILSRLGGVELLQDTLGHVMPSVQLPPNINLVPKVPVPLNTTKYNSALDTNATMINSFNKFPYPTQAELSWLTAASKHPEEHIRIWFATQRLKHGISWSPEEVEEARKKMFNGTIQSVPPTITVLPAQLAPTKVTQPILQTALPCQILGQTSLVLTQVTSGSTTVSCSPITLAVAGVTNHGQKRPLVTPQAAPEPKRPHIAQVPEPPPKVANPPLTPASDRKKTKEQIAHLKASFLQSQFPDDAEVYRLIEVTGLARSEIKKWFSDHRYRCQRGIVHITSESLAKDQLAIAASRHGRTYHAYPDFAPQKFKEKTQGQVKILEDSFLKSSFPTQAELDRLRVETKLSRREIDSWFSERRKLRDSMEQAVLDSMGSGKKGQDVGAPNGALSRLDQLSGAQLTSSLPSPSPAIAKSQEQVHLLRSTFARTQWPTPQEYDQLAAKTGLVRTEIVRWFKENRCLLKTGTVKWMEQYQHQPMADDHGYDAVARKATKPMAESPKNGGDVVPQYYKDPKKLCEEDLEKLVTRVKVGSEPAKDCLPAKPSEATSDRSEGSSRDGQGSDENEESSVVDYVEVTVGEEDAISDRSDSWSQAAAEGVSELAESDSDCVPAEAGQA.

Positions 27-77 (VDRAKEKGIGTPQPDVAKDSWAAELENSSKENEVIEVKSMGESQSKKLQGG) are interaction with EFNB1. Threonine 37 is modified (phosphothreonine). A Glycyl lysine isopeptide (Lys-Gly) (interchain with G-Cter in SUMO2) cross-link involves residue lysine 64. C2H2-type zinc fingers lie at residues 78–101 (YECKYCPYSTQNLNEFTEHVDMQH) and 110–133 (YVCAECNFTTKKYDSLSDHNSKFH). The segment covering 164–180 (SITTSGPGTGDSDSGIS) has biased composition (low complexity). Residues 164-204 (SITTSGPGTGDSDSGISVSKTPIMKPGKPKADAKKVPKKPE) are disordered. Residues 192 to 204 (PKADAKKVPKKPE) show a composition bias toward basic and acidic residues. The tract at residues 195–358 (DAKKVPKKPE…PAQLAPTKVT (164 aa)) is required for homodimerization. A Phosphothreonine modification is found at threonine 207. 4 DNA-binding regions (homeobox) span residues 263–324 (NTTK…WSPE), 439–501 (TPAS…IVHI), 530–591 (PQKF…EQAV), and 628–690 (SPSP…TVKW). The tract at residues 263–446 (NTTKYNSALD…PLTPASDRKK (184 aa)) is required for repressor activity. Residues 263-497 (NTTKYNSALD…SDHRYRCQRG (235 aa)) are required for interaction with NFYA. Residues 317–446 (HGISWSPEEV…PLTPASDRKK (130 aa)) form a required for nuclear localization region. Residues 404–445 (GQKRPLVTPQAAPEPKRPHIAQVPEPPPKVANPPLTPASDRK) form a disordered region. Positions 427–439 (PEPPPKVANPPLT) are enriched in pro residues. A Glycyl lysine isopeptide (Lys-Gly) (interchain with G-Cter in SUMO2) cross-link involves residue lysine 455. A disordered region spans residues 755–837 (PAKDCLPAKP…DCVPAEAGQA (83 aa)). Phosphoserine occurs at positions 825 and 827.

Belongs to the ZHX family. In terms of assembly, homodimer (via homeobox domain). Heterodimer with ZHX1 (via homeobox domain 1). Heterodimer with ZHX3 (via homeobox domain 1). Heterodimerization with ZHX1 is not necessary for repressor activity. Interacts (via homeobox domain) with NFYA (via N-terminus). Interacts with EFNB1 intracellular domain peptide; the interaction enhances ZHX2 transcriptional repression activity. Ubiquitously expressed. Expressed in podocytes.

It is found in the nucleus. Acts as a transcriptional repressor. Represses the promoter activity of the CDC25C gene stimulated by NFYA. May play a role in retinal development where it regulates the composition of bipolar cell populations, by promoting differentiation of bipolar OFF-type cells. In the brain, may promote maintenance and suppress differentiation of neural progenitor cells in the developing cortex. This chain is Zinc fingers and homeoboxes protein 2 (ZHX2), found in Homo sapiens (Human).